We begin with the raw amino-acid sequence, 57 residues long: Granulin-2 (57 aa).

Intrachain disulfides connect cysteine 4–cysteine 16 and cysteine 10–cysteine 26.

This sequence belongs to the granulin family. Granulins are disulfide bridged. Ubiquitous.

The protein localises to the secreted. Granulins have possible cytokine-like activity. They may play a role in inflammation, wound repair, and tissue remodeling. The sequence is that of Granulin-2 from Cyprinus carpio (Common carp).